A 434-amino-acid chain; its full sequence is Enolase (434 aa).

Residues H158 and E167 each contribute to the substrate site. Residue E210 is the Proton donor of the active site. 3 residues coordinate Mg(2+): D245, E294, and D319. The substrate site is built by E294 and D319. K344 (proton acceptor) is an active-site residue. Residues S371–S374 and K395 each bind substrate.

It belongs to the enolase family. In terms of assembly, homodimer. Mg(2+) is required as a cofactor.

It localises to the cytoplasm. It catalyses the reaction (2R)-2-phosphoglycerate = phosphoenolpyruvate + H2O. It functions in the pathway carbohydrate degradation; glycolysis; pyruvate from D-glyceraldehyde 3-phosphate: step 4/5. The polypeptide is Enolase (Caenorhabditis elegans).